Reading from the N-terminus, the 299-residue chain is Coenzyme PQQ synthesis protein B (299 aa).

The protein belongs to the PqqB family.

Its pathway is cofactor biosynthesis; pyrroloquinoline quinone biosynthesis. Functionally, may be involved in the transport of PQQ or its precursor to the periplasm. The chain is Coenzyme PQQ synthesis protein B from Methylobacterium sp. (strain 4-46).